A 1091-amino-acid chain; its full sequence is Exonuclease/helicase subunit RexB (1091 aa).

Belongs to the helicase family. AddB/RexB type 2 subfamily. Heterodimer of RexA (AddA) and RexB. The cofactor is Mg(2+).

In terms of biological role, involved in DNA double-strand break repair. Is not involved in recombination during natural competence or in plasmid establishment. The heterodimer acts as both an ATP-dependent DNA helicase and an ATP-dependent, dual-direction single-stranded exonuclease. Recognizes the chi site generating a DNA molecule suitable for the initiation of homologous recombination. This subunit has 5' -&gt; 3' nuclease activity but not helicase activity. This Streptococcus pneumoniae serotype 4 (strain ATCC BAA-334 / TIGR4) protein is Exonuclease/helicase subunit RexB.